The chain runs to 92 residues: VNCGQVNKALSSCVPFLTGFDTTPSLTCCAGVMELKRLAPTVKDKRIACECVKTAAARYPNIREDAASSLPYKCGVVINVPISKTTNCHEIN.

Disulfide bonds link C3/C51, C13/C28, C29/C74, and C49/C88.

Belongs to the plant LTP family.

Plant non-specific lipid-transfer proteins transfer phospholipids as well as galactolipids across membranes. May play a role in wax or cutin deposition in the cell walls of expanding epidermal cells and certain secretory tissues. This Ricinus communis (Castor bean) protein is Non-specific lipid-transfer protein B.